The sequence spans 138 residues: uncharacterized protein (138 aa).

The next 2 membrane-spanning stretches (helical) occupy residues 1–21 (MEIGYIFILAGFLVIALEAIV) and 46–66 (YAFISAIIAGVLTIIILHKFV).

Its subcellular location is the cell membrane. This is an uncharacterized protein from Methanocaldococcus jannaschii (strain ATCC 43067 / DSM 2661 / JAL-1 / JCM 10045 / NBRC 100440) (Methanococcus jannaschii).